A 1145-amino-acid polypeptide reads, in one-letter code: Protein sumv-2 (1145 aa).

The span at 1–13 (MKPGRKSLPKKNR) shows a compositional bias: basic residues. Disordered regions lie at residues 1 to 310 (MKPG…APPA), 429 to 464 (QSRT…QKAR), 999 to 1025 (HSAS…AGSE), 1040 to 1059 (QIAA…PRTE), and 1073 to 1145 (ITTG…ISLI). The span at 14–34 (ASNITEKMPTTSTEAQSSSSK) shows a compositional bias: polar residues. 2 stretches are compositionally biased toward basic and acidic residues: residues 73-104 (KTTE…EPRK) and 216-225 (VPEKKPKIED). The span at 226-248 (APTTSSPKKSTPTSAPPTRASAR) shows a compositional bias: low complexity. Over residues 455-464 (GDEKRQQKAR) the composition is skewed to basic and acidic residues. Over residues 999–1013 (HSASSSAAPSPVGAS) the composition is skewed to low complexity. Over residues 1091 to 1102 (VIERGDFRDHRP) the composition is skewed to basic and acidic residues. Residues 1121–1136 (QQPPLPSPAPPPPRGP) are compositionally biased toward pro residues.

Its function is as follows. Influences the activity of genes involved in vulval development. The polypeptide is Protein sumv-2 (Caenorhabditis elegans).